A 427-amino-acid chain; its full sequence is Serine hydroxymethyltransferase (427 aa).

120–122 (GHI) contributes to the (6S)-5,6,7,8-tetrahydrofolate binding site. Residue Lys-226 is modified to N6-(pyridoxal phosphate)lysine.

It belongs to the SHMT family. In terms of assembly, homodimer. Requires pyridoxal 5'-phosphate as cofactor.

It localises to the cytoplasm. Its pathway is amino-acid biosynthesis; glycine biosynthesis; glycine from L-serine: step 1/1. In terms of biological role, catalyzes the reversible interconversion of serine and glycine with a modified folate serving as the one-carbon carrier. Also exhibits a pteridine-independent aldolase activity toward beta-hydroxyamino acids, producing glycine and aldehydes, via a retro-aldol mechanism. The polypeptide is Serine hydroxymethyltransferase (Pyrococcus furiosus (strain ATCC 43587 / DSM 3638 / JCM 8422 / Vc1)).